The sequence spans 607 residues: Chaperone protein DnaK (607 aa).

The residue at position 173 (Thr-173) is a Phosphothreonine; by autocatalysis. Composition is skewed to basic and acidic residues over residues 490 to 509 (EQNA…RNEA) and 524 to 542 (GDNV…KEAL). Disordered stretches follow at residues 490–510 (EQNA…NEAD), 524–555 (GDNV…EDIK), and 574–607 (QQAQ…KDNK). The segment covering 574 to 587 (QQAQQGDAAGSNQS) has biased composition (polar residues). Basic and acidic residues predominate over residues 595–607 (TEVKDDDDKKDNK).

The protein belongs to the heat shock protein 70 family.

Functionally, acts as a chaperone. In Staphylococcus carnosus (strain TM300), this protein is Chaperone protein DnaK.